The sequence spans 401 residues: Probable tRNA sulfurtransferase (401 aa).

Residues 63–168 enclose the THUMP domain; sequence TTAEQALSYL…EREAFLYGAR (106 aa). Residues 186-187, 211-212, Arg268, Gly290, and Gln299 contribute to the ATP site; these read LL and YF.

This sequence belongs to the ThiI family.

Its subcellular location is the cytoplasm. It carries out the reaction [ThiI sulfur-carrier protein]-S-sulfanyl-L-cysteine + a uridine in tRNA + 2 reduced [2Fe-2S]-[ferredoxin] + ATP + H(+) = [ThiI sulfur-carrier protein]-L-cysteine + a 4-thiouridine in tRNA + 2 oxidized [2Fe-2S]-[ferredoxin] + AMP + diphosphate. It catalyses the reaction [ThiS sulfur-carrier protein]-C-terminal Gly-Gly-AMP + S-sulfanyl-L-cysteinyl-[cysteine desulfurase] + AH2 = [ThiS sulfur-carrier protein]-C-terminal-Gly-aminoethanethioate + L-cysteinyl-[cysteine desulfurase] + A + AMP + 2 H(+). Its pathway is cofactor biosynthesis; thiamine diphosphate biosynthesis. Functionally, catalyzes the ATP-dependent transfer of a sulfur to tRNA to produce 4-thiouridine in position 8 of tRNAs, which functions as a near-UV photosensor. Also catalyzes the transfer of sulfur to the sulfur carrier protein ThiS, forming ThiS-thiocarboxylate. This is a step in the synthesis of thiazole, in the thiamine biosynthesis pathway. The sulfur is donated as persulfide by IscS. The chain is Probable tRNA sulfurtransferase from Treponema pallidum (strain Nichols).